The primary structure comprises 458 residues: tRNA modification GTPase MnmE (458 aa).

The (6S)-5-formyl-5,6,7,8-tetrahydrofolate site is built by Arg-22, Glu-85, and Arg-124. In terms of domain architecture, TrmE-type G spans 220 to 379; the sequence is GIKTVIVGRP…LEEHISELVF (160 aa). K(+) is bound at residue Asn-230. GTP is bound by residues 230 to 235, 249 to 255, and 274 to 277; these read NVGKSS, TEIPGTT, and DTAG. Residue Ser-234 participates in Mg(2+) binding. 3 residues coordinate K(+): Thr-249, Ile-251, and Thr-254. Mg(2+) is bound at residue Thr-255. Position 458 (Lys-458) interacts with (6S)-5-formyl-5,6,7,8-tetrahydrofolate.

It belongs to the TRAFAC class TrmE-Era-EngA-EngB-Septin-like GTPase superfamily. TrmE GTPase family. In terms of assembly, homodimer. Heterotetramer of two MnmE and two MnmG subunits. The cofactor is K(+).

The protein resides in the cytoplasm. Functionally, exhibits a very high intrinsic GTPase hydrolysis rate. Involved in the addition of a carboxymethylaminomethyl (cmnm) group at the wobble position (U34) of certain tRNAs, forming tRNA-cmnm(5)s(2)U34. In Natranaerobius thermophilus (strain ATCC BAA-1301 / DSM 18059 / JW/NM-WN-LF), this protein is tRNA modification GTPase MnmE.